The primary structure comprises 408 residues: LL-diaminopimelate aminotransferase (408 aa).

Substrate-binding residues include Tyr15 and Gly42. Pyridoxal 5'-phosphate is bound by residues Tyr72, 108-109 (SK), Tyr132, Asn187, Tyr218, and 246-248 (SFS). Positions 109, 132, and 187 each coordinate substrate. An N6-(pyridoxal phosphate)lysine modification is found at Lys249. Residues Arg257 and Asn292 each coordinate pyridoxal 5'-phosphate. Residues Asn292 and Arg388 each contribute to the substrate site.

The protein belongs to the class-I pyridoxal-phosphate-dependent aminotransferase family. LL-diaminopimelate aminotransferase subfamily. As to quaternary structure, homodimer. Requires pyridoxal 5'-phosphate as cofactor.

The catalysed reaction is (2S,6S)-2,6-diaminopimelate + 2-oxoglutarate = (S)-2,3,4,5-tetrahydrodipicolinate + L-glutamate + H2O + H(+). Its pathway is amino-acid biosynthesis; L-lysine biosynthesis via DAP pathway; LL-2,6-diaminopimelate from (S)-tetrahydrodipicolinate (aminotransferase route): step 1/1. Its function is as follows. Involved in the synthesis of meso-diaminopimelate (m-DAP or DL-DAP), required for both lysine and peptidoglycan biosynthesis. Catalyzes the direct conversion of tetrahydrodipicolinate to LL-diaminopimelate. The chain is LL-diaminopimelate aminotransferase from Leptospira borgpetersenii serovar Hardjo-bovis (strain L550).